The primary structure comprises 229 residues: Probable methylthioribulose-1-phosphate dehydratase (229 aa).

Position 97 (Cys97) interacts with substrate. His115 and His117 together coordinate Zn(2+). Catalysis depends on Glu139, which acts as the Proton donor/acceptor. His195 lines the Zn(2+) pocket.

Belongs to the aldolase class II family. MtnB subfamily. Zn(2+) is required as a cofactor.

It localises to the cytoplasm. It catalyses the reaction 5-(methylsulfanyl)-D-ribulose 1-phosphate = 5-methylsulfanyl-2,3-dioxopentyl phosphate + H2O. It functions in the pathway amino-acid biosynthesis; L-methionine biosynthesis via salvage pathway; L-methionine from S-methyl-5-thio-alpha-D-ribose 1-phosphate: step 2/6. Its function is as follows. Catalyzes the dehydration of methylthioribulose-1-phosphate (MTRu-1-P) into 2,3-diketo-5-methylthiopentyl-1-phosphate (DK-MTP-1-P). This is Probable methylthioribulose-1-phosphate dehydratase from Acyrthosiphon pisum (Pea aphid).